The chain runs to 514 residues: GMP synthase [glutamine-hydrolyzing] (514 aa).

In terms of domain architecture, Glutamine amidotransferase type-1 spans 9-199 (KIIVLDFGSQ…ALNVCGCKGD (191 aa)). Catalysis depends on C86, which acts as the Nucleophile. Active-site residues include H173 and E175. In terms of domain architecture, GMPS ATP-PPase spans 200–389 (WTMENFSEVE…LGMPDAIVWR (190 aa)). 227–233 (SGGVDSS) contacts ATP.

In terms of assembly, homodimer.

It catalyses the reaction XMP + L-glutamine + ATP + H2O = GMP + L-glutamate + AMP + diphosphate + 2 H(+). It functions in the pathway purine metabolism; GMP biosynthesis; GMP from XMP (L-Gln route): step 1/1. In terms of biological role, catalyzes the synthesis of GMP from XMP. The protein is GMP synthase [glutamine-hydrolyzing] of Listeria monocytogenes serotype 4b (strain F2365).